An 87-amino-acid polypeptide reads, in one-letter code: Small ribosomal subunit protein bS20 (87 aa).

Belongs to the bacterial ribosomal protein bS20 family.

Functionally, binds directly to 16S ribosomal RNA. The chain is Small ribosomal subunit protein bS20 from Alkaliphilus oremlandii (strain OhILAs) (Clostridium oremlandii (strain OhILAs)).